A 538-amino-acid polypeptide reads, in one-letter code: Chaperonin GroEL 1 (538 aa).

Residues 30–33, Lys-51, 87–91, Gly-415, 479–481, and Asp-495 contribute to the ATP site; these read TLGP, DGTTT, and NAA.

Belongs to the chaperonin (HSP60) family. As to quaternary structure, forms a cylinder of 14 subunits composed of two heptameric rings stacked back-to-back. Interacts with the co-chaperonin GroES.

It is found in the cytoplasm. The catalysed reaction is ATP + H2O + a folded polypeptide = ADP + phosphate + an unfolded polypeptide.. Together with its co-chaperonin GroES, plays an essential role in assisting protein folding. The GroEL-GroES system forms a nano-cage that allows encapsulation of the non-native substrate proteins and provides a physical environment optimized to promote and accelerate protein folding. The polypeptide is Chaperonin GroEL 1 (Chromobacterium violaceum (strain ATCC 12472 / DSM 30191 / JCM 1249 / CCUG 213 / NBRC 12614 / NCIMB 9131 / NCTC 9757 / MK)).